The following is a 252-amino-acid chain: Chitooligosaccharide deacetylase (252 aa).

Histidine 61 and histidine 125 together coordinate Mg(2+).

Belongs to the YdjC deacetylase family. ChbG subfamily. In terms of assembly, homodimer. Requires Mg(2+) as cofactor.

It is found in the cytoplasm. It catalyses the reaction N,N'-diacetylchitobiose + H2O = N-acetyl-beta-D-glucosaminyl-(1-&gt;4)-D-glucosamine + acetate. It carries out the reaction diacetylchitobiose-6'-phosphate + H2O = N'-monoacetylchitobiose-6'-phosphate + acetate. It functions in the pathway glycan degradation; chitin degradation. In terms of biological role, involved in the degradation of chitin. ChbG is essential for growth on the acetylated chitooligosaccharides chitobiose and chitotriose but is dispensable for growth on cellobiose and chitosan dimer, the deacetylated form of chitobiose. Deacetylation of chitobiose-6-P and chitotriose-6-P is necessary for both the activation of the chb promoter by the regulatory protein ChbR and the hydrolysis of phosphorylated beta-glucosides by the phospho-beta-glucosidase ChbF. Catalyzes the removal of only one acetyl group from chitobiose-6-P to yield monoacetylchitobiose-6-P, the inducer of ChbR and the substrate of ChbF. In Salmonella typhimurium (strain LT2 / SGSC1412 / ATCC 700720), this protein is Chitooligosaccharide deacetylase.